A 207-amino-acid chain; its full sequence is Uracil phosphoribosyltransferase (207 aa).

5-phospho-alpha-D-ribose 1-diphosphate-binding positions include Arg-77, Arg-102, and 129–137; that span reads DPMLATGGS. Residues Ile-192 and 197–199 each bind uracil; that span reads GDA. Residue Asp-198 participates in 5-phospho-alpha-D-ribose 1-diphosphate binding.

The protein belongs to the UPRTase family. Mg(2+) is required as a cofactor.

The catalysed reaction is UMP + diphosphate = 5-phospho-alpha-D-ribose 1-diphosphate + uracil. It participates in pyrimidine metabolism; UMP biosynthesis via salvage pathway; UMP from uracil: step 1/1. Its activity is regulated as follows. Allosterically activated by GTP. Its function is as follows. Catalyzes the conversion of uracil and 5-phospho-alpha-D-ribose 1-diphosphate (PRPP) to UMP and diphosphate. This is Uracil phosphoribosyltransferase from Mycoplasma mobile (strain ATCC 43663 / 163K / NCTC 11711) (Mesomycoplasma mobile).